The following is a 110-amino-acid chain: Large ribosomal subunit protein uL22 (110 aa).

The protein belongs to the universal ribosomal protein uL22 family. In terms of assembly, part of the 50S ribosomal subunit.

Its function is as follows. This protein binds specifically to 23S rRNA; its binding is stimulated by other ribosomal proteins, e.g. L4, L17, and L20. It is important during the early stages of 50S assembly. It makes multiple contacts with different domains of the 23S rRNA in the assembled 50S subunit and ribosome. In terms of biological role, the globular domain of the protein is located near the polypeptide exit tunnel on the outside of the subunit, while an extended beta-hairpin is found that lines the wall of the exit tunnel in the center of the 70S ribosome. The polypeptide is Large ribosomal subunit protein uL22 (Delftia acidovorans (strain DSM 14801 / SPH-1)).